Reading from the N-terminus, the 501-residue chain is Actin-binding protein WASF3 (501 aa).

Residues 57–93 (NEANNFYIRANSLQDRIDRLAVKVTQLDSTVEEVSLQ) are a coiled coil. Tyrosine 151 is modified (phosphotyrosine; by ABL1). Residues 162-206 (KEKMLQDTEDKRKEKRRQKEQKRVDGTTREVKKVRKARNRRQEWN) are a coiled coil. The disordered stretch occupies residues 170–443 (EDKRKEKRRQ…PPISDARSDL (274 aa)). The segment covering 182–192 (QKRVDGTTREV) has biased composition (basic and acidic residues). The segment covering 219–237 (RLSQSVHHGASSEGSLSPD) has biased composition (polar residues). At tyrosine 248 the chain carries Phosphotyrosine; by ABL1. Residues 256–267 (HALQAQPATPSY) show a composition bias toward polar residues. Pro residues predominate over residues 302 to 312 (QQPPPPPPPQA). A Phosphotyrosine; by ABL1 modification is found at tyrosine 337. Composition is skewed to pro residues over residues 341-352 (SGPPPPPPPPMI) and 394-410 (APPP…PPGP). Low complexity predominate over residues 411–422 (SSLSSSPMHGPP). Residues 439–456 (ARSDLLAAIRMGIQLKKV) form the WH2 domain. A Phosphotyrosine; by ABL1 modification is found at tyrosine 485.

Belongs to the SCAR/WAVE family. Binds actin and the Arp2/3 complex. Phosphorylation by ABL1 promotes lamellipodia formation and cell migration.

The protein resides in the cytoplasm. The protein localises to the cytoskeleton. In terms of biological role, downstream effector molecules involved in the transmission of signals from tyrosine kinase receptors and small GTPases to the actin cytoskeleton. Plays a role in the regulation of cell morphology and cytoskeletal organization. Required in the control of cell shape. The polypeptide is Actin-binding protein WASF3 (Wasf3) (Mus musculus (Mouse)).